A 118-amino-acid chain; its full sequence is Small ribosomal subunit protein uS13 (118 aa).

A disordered region spans residues 91 to 118; the sequence is HRRGLPVRGQRTKTNARTRKGPRKPIKK.

This sequence belongs to the universal ribosomal protein uS13 family. Part of the 30S ribosomal subunit. Forms a loose heterodimer with protein S19. Forms two bridges to the 50S subunit in the 70S ribosome.

In terms of biological role, located at the top of the head of the 30S subunit, it contacts several helices of the 16S rRNA. In the 70S ribosome it contacts the 23S rRNA (bridge B1a) and protein L5 of the 50S subunit (bridge B1b), connecting the 2 subunits; these bridges are implicated in subunit movement. Contacts the tRNAs in the A and P-sites. The chain is Small ribosomal subunit protein uS13 from Hamiltonella defensa subsp. Acyrthosiphon pisum (strain 5AT).